Reading from the N-terminus, the 140-residue chain is Nucleoside diphosphate kinase (140 aa).

Lysine 11, phenylalanine 59, arginine 87, threonine 93, arginine 104, and asparagine 114 together coordinate ATP. Histidine 117 (pros-phosphohistidine intermediate) is an active-site residue.

Belongs to the NDK family. Homotetramer. Mg(2+) serves as cofactor.

The protein localises to the cytoplasm. The enzyme catalyses a 2'-deoxyribonucleoside 5'-diphosphate + ATP = a 2'-deoxyribonucleoside 5'-triphosphate + ADP. It catalyses the reaction a ribonucleoside 5'-diphosphate + ATP = a ribonucleoside 5'-triphosphate + ADP. In terms of biological role, major role in the synthesis of nucleoside triphosphates other than ATP. The ATP gamma phosphate is transferred to the NDP beta phosphate via a ping-pong mechanism, using a phosphorylated active-site intermediate. In Rhodopseudomonas palustris (strain BisB5), this protein is Nucleoside diphosphate kinase.